We begin with the raw amino-acid sequence, 2560 residues long: Plipastatin synthase subunit B (2560 aa).

The segment at Ile-7–Ala-310 is condensation 1. Positions Ile-7–His-1042 are domain 1 (tyrosine-activating). An adenylation 1 region spans residues Thr-496–Val-889. One can recognise a Carrier 1 domain in the interval Ala-965–Lys-1040. Ser-1000 bears the O-(pantetheine 4'-phosphoryl)serine mark. The condensation 2 stretch occupies residues Gln-1052–Glu-1342. The segment at Gln-1052–Ile-2553 is domain 2 (D-allo-threonine-activating). Positions Thr-1527–Val-1927 are adenylation 2. A Carrier 2 domain is found at Ser-2006–Val-2080. The residue at position 2041 (Ser-2041) is an O-(pantetheine 4'-phosphoryl)serine. Positions Val-2088 to Ile-2553 are epimerization.

Belongs to the ATP-dependent AMP-binding enzyme family. Requires pantetheine 4'-phosphate as cofactor.

Its function is as follows. This protein is a multifunctional enzyme, able to activate and polymerize the amino acids Tyr and Thr as part of the biosynthesis of the lipopeptide antibiotic plipastatin. The Thr residue is further converted to the D-allo-isomer form. The activation sites for these amino acids consist of individual domains. In Bacillus subtilis (strain 168), this protein is Plipastatin synthase subunit B (ppsB).